The chain runs to 160 residues: Large ribosomal subunit protein eL21 (160 aa).

2 stretches are compositionally biased toward basic and acidic residues: residues Asn-112 to Gly-123 and Arg-136 to Gly-145. The interval Asn-112 to Gly-145 is disordered.

It belongs to the eukaryotic ribosomal protein eL21 family. As to quaternary structure, component of the large ribosomal subunit.

It localises to the cytoplasm. The protein localises to the cytosol. It is found in the endoplasmic reticulum. Functionally, component of the large ribosomal subunit. The ribosome is a large ribonucleoprotein complex responsible for the synthesis of proteins in the cell. The protein is Large ribosomal subunit protein eL21 of Mus musculus (Mouse).